A 287-amino-acid polypeptide reads, in one-letter code: Octanoyl-[GcvH]:protein N-octanoyltransferase (287 aa).

The BPL/LPL catalytic domain maps to 45-253; it reads GESPATARSW…ELKELSGRLY (209 aa). The Acyl-thioester intermediate role is filled by C150.

It belongs to the octanoyltransferase LipL family.

It catalyses the reaction N(6)-octanoyl-L-lysyl-[glycine-cleavage complex H protein] + L-lysyl-[lipoyl-carrier protein] = N(6)-octanoyl-L-lysyl-[lipoyl-carrier protein] + L-lysyl-[glycine-cleavage complex H protein]. It participates in protein modification; protein lipoylation via endogenous pathway; protein N(6)-(lipoyl)lysine from octanoyl-[acyl-carrier-protein]. Its function is as follows. Catalyzes the amidotransfer (transamidation) of the octanoyl moiety from octanoyl-GcvH to the lipoyl domain of the E2 subunit of lipoate-dependent enzymes. The protein is Octanoyl-[GcvH]:protein N-octanoyltransferase of Bacillus velezensis (strain DSM 23117 / BGSC 10A6 / LMG 26770 / FZB42) (Bacillus amyloliquefaciens subsp. plantarum).